The sequence spans 910 residues: Protein translocase subunit SecA (910 aa).

ATP is bound by residues glutamine 89, 107–111 (GEGKT), and aspartate 502. Zn(2+)-binding residues include cysteine 894, cysteine 896, cysteine 905, and histidine 906.

It belongs to the SecA family. Monomer and homodimer. Part of the essential Sec protein translocation apparatus which comprises SecA, SecYEG and auxiliary proteins SecDF-YajC and YidC. Requires Zn(2+) as cofactor.

The protein resides in the cell inner membrane. It is found in the cytoplasm. It catalyses the reaction ATP + H2O + cellular proteinSide 1 = ADP + phosphate + cellular proteinSide 2.. Its function is as follows. Part of the Sec protein translocase complex. Interacts with the SecYEG preprotein conducting channel. Has a central role in coupling the hydrolysis of ATP to the transfer of proteins into and across the cell membrane, serving both as a receptor for the preprotein-SecB complex and as an ATP-driven molecular motor driving the stepwise translocation of polypeptide chains across the membrane. The protein is Protein translocase subunit SecA of Chelativorans sp. (strain BNC1).